A 389-amino-acid polypeptide reads, in one-letter code: Formate-dependent phosphoribosylglycinamide formyltransferase (389 aa).

N(1)-(5-phospho-beta-D-ribosyl)glycinamide contacts are provided by residues 21 to 22 (EL) and E81. Residues R113, K154, 159–164 (SSGKGQ), 194–197 (EEFI), and E202 each bind ATP. Residues 118-307 (RLAAEKLGLK…EFEIHVRAIL (190 aa)) form the ATP-grasp domain. Mg(2+) is bound by residues E266 and E278. N(1)-(5-phospho-beta-D-ribosyl)glycinamide contacts are provided by residues D285, K353, and 360–361 (RR).

The protein belongs to the PurK/PurT family. Homodimer.

The catalysed reaction is N(1)-(5-phospho-beta-D-ribosyl)glycinamide + formate + ATP = N(2)-formyl-N(1)-(5-phospho-beta-D-ribosyl)glycinamide + ADP + phosphate + H(+). It functions in the pathway purine metabolism; IMP biosynthesis via de novo pathway; N(2)-formyl-N(1)-(5-phospho-D-ribosyl)glycinamide from N(1)-(5-phospho-D-ribosyl)glycinamide (formate route): step 1/1. Involved in the de novo purine biosynthesis. Catalyzes the transfer of formate to 5-phospho-ribosyl-glycinamide (GAR), producing 5-phospho-ribosyl-N-formylglycinamide (FGAR). Formate is provided by PurU via hydrolysis of 10-formyl-tetrahydrofolate. The chain is Formate-dependent phosphoribosylglycinamide formyltransferase from Methanocaldococcus jannaschii (strain ATCC 43067 / DSM 2661 / JAL-1 / JCM 10045 / NBRC 100440) (Methanococcus jannaschii).